We begin with the raw amino-acid sequence, 865 residues long: MLSPNDKKLEKLDPFYLPSLSKQKTSAEIVSEARNALRTVRTQRPFTPREDQRKLFGPASSRTPENRPPSSFSVHASSFEFSDSRPISGTRLSPLEFKPKAPASPDTVEDFCLSFPKPPVDPAKIRRISSARARLFRVASQGALLPARTLLPTQPTRVESEETVTTRDSVVKINGIYLTESKAIGHLKRHPLQLTYDGDFSKITEQEMFKGATSVPFHLRSGGDQGKRRPRASSSSRSPDQSRLDIRAGSKADLQEKNTEIEVDEVFWNTRIVPILHDLEKEENIEMVCATCTQLHHALEEGNMLGNKFKRRSVLLKTLYKLVDVGSDLLSLKLAKIILALKVSGKNLLNVCKLIFKISRSEKNDSLIRNDSILESLLEVLRSEDLQANTEAFLYCMGTIKFISGNPEFLHEMMGKGAVEILMSLIKQVNENTKKSGTCLPNSGHLLVQMTATLRNLVDSPLARSKLLSINALPQLCTVMEQHIGDKDVCTNIARIFSKLTSYHDCCVALASYSRCYALFLNLINKYQKKQDLVVRVVFILGNLTAKNNQAREQFSKEKGSIPTLLSLFHTFYKLDLHSGKRWGEGDERPEARRPAQAEDVLIKLTRVLANLAIHPGVGPAIAAHSHIVGLLLATLESKSIDDCEELVINTTATINNLSYYKVKNSIIQDRKLYIAELLLKLLVSNNMDGILEAVRVFGNLSQDHDICDFIVQKNVHKFMIALLDAKHQDICFSACGVLLNLTVDRDKRLILKEGGGIKKLVDCLRDFGPTDWQLASLVCKTLWNFSENITNAASCFGDEAANTLLALLSSFLDEELALNGSFDQDLKNYHKLHWETEFRPVAQQLLNRIKNHHTFLEPLPIPSF.

Disordered regions lie at residues 39–75 (TVRT…FSVH) and 214–243 (SVPF…DQSR). Residues 60 to 75 (SSRTPENRPPSSFSVH) show a composition bias toward polar residues. 12 ARM repeats span residues 261–300 (IEVD…HALE), 303–343 (NMLG…ALKV), 362–402 (EKND…TIKF), 407–448 (PEFL…HLLV), 461–502 (PLAR…KLTS), 505–546 (DCCV…NLTA), 550–587 (QARE…GEGD), 589–614 (RPEA…NLAI), 617–660 (GVGP…NLSY), 662–703 (KVKN…NLSQ), 705–744 (HDIC…NLTV), and 746–788 (RDKR…NFSE).

In terms of biological role, required for sperm flagellum axoneme organization and function. Involved in axonemal central pair complex assembly and/or stability. This chain is Armadillo repeat-containing protein 2, found in Bos taurus (Bovine).